We begin with the raw amino-acid sequence, 478 residues long: Calcitonin receptor (478 aa).

The N-terminal stretch at 1–22 (MRFTFTRQFLAFFILISNPASI) is a signal peptide. The Extracellular segment spans residues 23–146 (LPRSENLTFP…FTPEKLQNAY (124 aa)). N-linked (GlcNAc...) asparagine glycans are attached at residues Asn28, Asn73, Asn125, and Asn130. 3 cysteine pairs are disulfide-bonded: Cys55–Cys81, Cys72–Cys112, and Cys95–Cys134. Residues 147-169 (VLYYLAIVGHSMSIITLVVSLGI) form a helical membrane-spanning segment. At 170–181 (FVYFRSLGCQRV) the chain is on the cytoplasmic side. A helical transmembrane segment spans residues 182 to 202 (TLHKNMFLTYILNSMIIIIHL). At 203-219 (VEVVPNGELVRKDPVSC) the chain is on the extracellular side. An intrachain disulfide couples Cys219 to Cys289. The chain crosses the membrane as a helical span at residues 220–242 (KILHFFHQYMMACNYFWMLCEGI). Residues 243–259 (YLHTLIVVSVFNEAKHL) lie on the Cytoplasmic side of the membrane. The helical transmembrane segment at 260 to 280 (RWYYLLGWGFPLVPTTIHAIT) threads the bilayer. Topologically, residues 281-296 (RALYFNDNCWISVDTH) are extracellular. Residues 297-320 (LLYIIHGPVMVALVVNFFFLLNIV) form a helical membrane-spanning segment. Residues 321–340 (RVLVTKMRETHEAESYMYLK) are Cytoplasmic-facing. Residues 341-359 (AVKATMILVPLLGIQFVVF) traverse the membrane as a helical segment. Residues 360–367 (PWRPSNKV) lie on the Extracellular side of the membrane. The chain crosses the membrane as a helical span at residues 368-394 (LGKIYDYFMHSLIHFQGFFVATIYCFC). Residues 395 to 478 (NNEVQTTLKR…LNIIEKESSA (84 aa)) lie on the Cytoplasmic side of the membrane.

The protein belongs to the G-protein coupled receptor 2 family. Heterodimer of CALCR and RAMP1, RAMP2 or RAMP3; the receptor complexes function as AMYR1, AMYR2 and AMYR3 receptors, respectively, and respond to amylin/IAPP, calcitonin/CT and CGRP1 ligands. Interacts with GPRASP2.

Its subcellular location is the cell membrane. Functionally, g protein-coupled receptor activated by ligand peptides amylin (IAPP), calcitonin (CT/CALCA) and calcitonin gene-related peptide type 1 (CGRP1/CALCA). CALCR interacts with receptor-activity-modifying proteins RAMP1, 2 and 3 to form receptor complexes AMYR1, 2 and 3, respectively. IAPP, CT and CGRP1 activate CALCR and AMYRs with distinct modes of receptor activation resulting in specific phenotypes. Ligand binding causes a conformation change that triggers signaling via guanine nucleotide-binding proteins (G proteins) and modulates the activity of downstream effectors. Activates cAMP-dependent pathway. In Cavia porcellus (Guinea pig), this protein is Calcitonin receptor.